Consider the following 466-residue polypeptide: Cysteine--tRNA ligase (466 aa).

Residue C27 coordinates Zn(2+). Residues 29-39 (PTVYDLAHIGN) carry the 'HIGH' region motif. Zn(2+) is bound by residues C211, H236, and E240. The short motif at 270–274 (KMSKS) is the 'KMSKS' region element. K273 is a binding site for ATP.

The protein belongs to the class-I aminoacyl-tRNA synthetase family. Monomer. Requires Zn(2+) as cofactor.

Its subcellular location is the cytoplasm. The catalysed reaction is tRNA(Cys) + L-cysteine + ATP = L-cysteinyl-tRNA(Cys) + AMP + diphosphate. The polypeptide is Cysteine--tRNA ligase (Anaplasma marginale (strain St. Maries)).